Here is a 446-residue protein sequence, read N- to C-terminus: Exodeoxyribonuclease 7 large subunit (446 aa).

This sequence belongs to the XseA family. Heterooligomer composed of large and small subunits.

Its subcellular location is the cytoplasm. It carries out the reaction Exonucleolytic cleavage in either 5'- to 3'- or 3'- to 5'-direction to yield nucleoside 5'-phosphates.. Bidirectionally degrades single-stranded DNA into large acid-insoluble oligonucleotides, which are then degraded further into small acid-soluble oligonucleotides. This is Exodeoxyribonuclease 7 large subunit from Streptococcus agalactiae serotype III (strain NEM316).